The chain runs to 347 residues: NADH-quinone oxidoreductase subunit H (347 aa).

A run of 8 helical transmembrane segments spans residues 14–34, 82–102, 115–135, 161–181, 198–218, 258–278, 285–305, and 321–341; these read IMIGQSLLLLVCLLVFIAYIL, AVFLLAPLVAVTLALATWAVI, VGILYVFAISSLEVYGIIMGG, IGFVIVTVLLCAGSLNLTDIV, LLDWHWLSLFPMFVIFFISAL, AIVLMCALTTILFLGGWLPPL, WVPGIIWFILKATLVFFMFGI, and LGWKVFLPLSLAMVVIVAFVL.

Belongs to the complex I subunit 1 family. In terms of assembly, NDH-1 is composed of 14 different subunits. Subunits NuoA, H, J, K, L, M, N constitute the membrane sector of the complex.

Its subcellular location is the cell inner membrane. It carries out the reaction a quinone + NADH + 5 H(+)(in) = a quinol + NAD(+) + 4 H(+)(out). Its function is as follows. NDH-1 shuttles electrons from NADH, via FMN and iron-sulfur (Fe-S) centers, to quinones in the respiratory chain. The immediate electron acceptor for the enzyme in this species is believed to be ubiquinone. Couples the redox reaction to proton translocation (for every two electrons transferred, four hydrogen ions are translocated across the cytoplasmic membrane), and thus conserves the redox energy in a proton gradient. This subunit may bind ubiquinone. In Allorhizobium ampelinum (strain ATCC BAA-846 / DSM 112012 / S4) (Agrobacterium vitis (strain S4)), this protein is NADH-quinone oxidoreductase subunit H.